A 434-amino-acid polypeptide reads, in one-letter code: Adenylosuccinate synthetase (434 aa).

Residues 22-28 (GDEGKGK) and 50-52 (GHT) contribute to the GTP site. Asp-23 serves as the catalytic Proton acceptor. Mg(2+)-binding residues include Asp-23 and Gly-50. IMP contacts are provided by residues 23–26 (DEGK), 48–51 (NAGH), Thr-139, Arg-153, Gln-234, Thr-249, and Arg-313. Residue His-51 is the Proton donor of the active site. Residue 309–315 (ATTGRKR) coordinates substrate. Residues Arg-315, 341–343 (KLD), and 423–425 (SVG) each bind GTP.

It belongs to the adenylosuccinate synthetase family. In terms of assembly, homodimer. Requires Mg(2+) as cofactor.

The protein localises to the cytoplasm. It catalyses the reaction IMP + L-aspartate + GTP = N(6)-(1,2-dicarboxyethyl)-AMP + GDP + phosphate + 2 H(+). The protein operates within purine metabolism; AMP biosynthesis via de novo pathway; AMP from IMP: step 1/2. Functionally, plays an important role in the de novo pathway of purine nucleotide biosynthesis. Catalyzes the first committed step in the biosynthesis of AMP from IMP. The polypeptide is Adenylosuccinate synthetase (Chlorobium chlorochromatii (strain CaD3)).